The sequence spans 268 residues: uncharacterized protein (268 aa).

To M.tuberculosis Rv0025 and Rv0026.

This is an uncharacterized protein from Mycobacterium tuberculosis (strain CDC 1551 / Oshkosh).